The sequence spans 213 residues: Nucleoside triphosphate pyrophosphatase (213 aa).

D79 functions as the Proton acceptor in the catalytic mechanism.

This sequence belongs to the Maf family. The cofactor is a divalent metal cation.

It is found in the cytoplasm. The catalysed reaction is a ribonucleoside 5'-triphosphate + H2O = a ribonucleoside 5'-phosphate + diphosphate + H(+). It catalyses the reaction a 2'-deoxyribonucleoside 5'-triphosphate + H2O = a 2'-deoxyribonucleoside 5'-phosphate + diphosphate + H(+). Nucleoside triphosphate pyrophosphatase. May have a dual role in cell division arrest and in preventing the incorporation of modified nucleotides into cellular nucleic acids. The sequence is that of Nucleoside triphosphate pyrophosphatase from Rhodococcus erythropolis (strain PR4 / NBRC 100887).